An 880-amino-acid polypeptide reads, in one-letter code: Translation initiation factor IF-2 (880 aa).

Composition is skewed to basic and acidic residues over residues 180–194 (QEAA…EAAK) and 202–228 (LAEE…DHHI). A disordered region spans residues 180-289 (QEAATKRKQD…APESMAHGFN (110 aa)). Basic residues predominate over residues 249–262 (GRRARNKSNAKKRG). In terms of domain architecture, tr-type G spans 380-549 (SRAPVVTIMG…LLQAEVLELK (170 aa)). The segment at 389 to 396 (GHVDHGKT) is G1. 389 to 396 (GHVDHGKT) contributes to the GTP binding site. Residues 414 to 418 (GITQH) form a G2 region. The interval 435 to 438 (DTPG) is G3. GTP is bound by residues 435 to 439 (DTPGH) and 489 to 492 (NKMD). The tract at residues 489 to 492 (NKMD) is G4. A G5 region spans residues 525 to 527 (SAK).

It belongs to the TRAFAC class translation factor GTPase superfamily. Classic translation factor GTPase family. IF-2 subfamily.

Its subcellular location is the cytoplasm. Functionally, one of the essential components for the initiation of protein synthesis. Protects formylmethionyl-tRNA from spontaneous hydrolysis and promotes its binding to the 30S ribosomal subunits. Also involved in the hydrolysis of GTP during the formation of the 70S ribosomal complex. This Shewanella baltica (strain OS223) protein is Translation initiation factor IF-2.